A 398-amino-acid chain; its full sequence is 1-deoxy-D-xylulose 5-phosphate reductoisomerase (398 aa).

Thr-11, Gly-12, Ser-13, Ile-14, Arg-38, Asn-39, and Asn-125 together coordinate NADPH. Residue Lys-126 participates in 1-deoxy-D-xylulose 5-phosphate binding. Residue Glu-127 coordinates NADPH. Position 151 (Asp-151) interacts with Mn(2+). Ser-152, Glu-153, Ser-179, and His-202 together coordinate 1-deoxy-D-xylulose 5-phosphate. Mn(2+) is bound at residue Glu-153. Gly-208 lines the NADPH pocket. 4 residues coordinate 1-deoxy-D-xylulose 5-phosphate: Ser-215, Asn-220, Lys-221, and Glu-224. Mn(2+) is bound at residue Glu-224.

This sequence belongs to the DXR family. Mg(2+) is required as a cofactor. Requires Mn(2+) as cofactor.

The catalysed reaction is 2-C-methyl-D-erythritol 4-phosphate + NADP(+) = 1-deoxy-D-xylulose 5-phosphate + NADPH + H(+). It functions in the pathway isoprenoid biosynthesis; isopentenyl diphosphate biosynthesis via DXP pathway; isopentenyl diphosphate from 1-deoxy-D-xylulose 5-phosphate: step 1/6. Functionally, catalyzes the NADPH-dependent rearrangement and reduction of 1-deoxy-D-xylulose-5-phosphate (DXP) to 2-C-methyl-D-erythritol 4-phosphate (MEP). This Burkholderia cenocepacia (strain HI2424) protein is 1-deoxy-D-xylulose 5-phosphate reductoisomerase.